The chain runs to 668 residues: Myb-like protein W (668 aa).

6 disordered regions span residues 57-124 (LDQF…NESV), 246-357 (EKEK…EEEV), 403-432 (KPKSKLKSSSKPGIPTSPITMKTNPHTDKG), 497-546 (YTNT…NKER), 561-583 (SMGRFSAKPPPIKTTTTTTTTTS), and 631-668 (QCEERKKKEDRDVDEDGEDDYYFGGDNSKNGDDDDEII). Positions 69–121 (NNNNNNNSNNNNNNNNNNNNNNNNNNNNNNNNNNNNNNNNNNYNNYNNNNNNN) are enriched in low complexity. The segment covering 246 to 268 (EKEKRKKEREEREEREKQEKQEQ) has biased composition (basic and acidic residues). Over residues 293 to 307 (NNKDNNHNGYYYYYD) the composition is skewed to low complexity. The span at 308–318 (NDNDNYNDGDD) shows a compositional bias: acidic residues. Residues 319 to 335 (EKEKEKEKEKEKEKENE) show a composition bias toward basic and acidic residues. The 55-residue stretch at 344–398 (TSMVNSEEWTEEEVNKMNEIRGKLSTADYNYWDKVSAHVKSKTAEQCQRKYNSRF) folds into the Myb-like domain. Over residues 501–542 (NNNNNNNNNNNNNNNNNNNNNNNNNNNNNNNNNNNNNNNNNN) the composition is skewed to low complexity. The span at 632–641 (CEERKKKEDR) shows a compositional bias: basic and acidic residues. The segment covering 642-651 (DVDEDGEDDY) has biased composition (acidic residues).

The sequence is that of Myb-like protein W (mybW) from Dictyostelium discoideum (Social amoeba).